The following is a 380-amino-acid chain: 5-amino-6-(D-ribitylamino)uracil--L-tyrosine 4-hydroxyphenyl transferase (380 aa).

The 248-residue stretch at 56 to 303 (VTYIINRNIN…GAVARIYLGN (248 aa)) folds into the Radical SAM core domain. [4Fe-4S] cluster-binding residues include C70, C74, and C77.

It belongs to the radical SAM superfamily. CofH family. Consists of two subunits, CofG and CofH. Requires [4Fe-4S] cluster as cofactor.

It carries out the reaction 5-amino-6-(D-ribitylamino)uracil + L-tyrosine + S-adenosyl-L-methionine = 5-amino-5-(4-hydroxybenzyl)-6-(D-ribitylimino)-5,6-dihydrouracil + 2-iminoacetate + 5'-deoxyadenosine + L-methionine + H(+). It participates in cofactor biosynthesis; coenzyme F0 biosynthesis. Functionally, catalyzes the radical-mediated synthesis of 5-amino-5-(4-hydroxybenzyl)-6-(D-ribitylimino)-5,6-dihydrouracil from 5-amino-6-(D-ribitylamino)uracil and L-tyrosine. This is 5-amino-6-(D-ribitylamino)uracil--L-tyrosine 4-hydroxyphenyl transferase from Nostoc punctiforme (strain ATCC 29133 / PCC 73102).